The following is a 259-amino-acid chain: Haloacid dehalogenase-like hydrolase domain-containing protein 2 (259 aa).

The Mg(2+) site is built by D13 and S15. Substrate contacts are provided by residues 13–15 (DLS) and 46–47 (TN). Residues 47-71 (NTTKESKQDLLERLKKLEFDISEDE) adopt a coiled-coil conformation. K50 bears the N6-succinyllysine mark. Substrate is bound at residue K179. Position 204 (D204) interacts with Mg(2+).

This sequence belongs to the HAD-like hydrolase superfamily. Requires Mg(2+) as cofactor.

The protein is Haloacid dehalogenase-like hydrolase domain-containing protein 2 (HDHD2) of Bos taurus (Bovine).